The chain runs to 165 residues: Ribosomal RNA large subunit methyltransferase H (165 aa).

Residue Gly-109 participates in S-adenosyl-L-methionine binding.

It belongs to the RNA methyltransferase RlmH family. Homodimer.

Its subcellular location is the cytoplasm. The enzyme catalyses pseudouridine(1915) in 23S rRNA + S-adenosyl-L-methionine = N(3)-methylpseudouridine(1915) in 23S rRNA + S-adenosyl-L-homocysteine + H(+). In terms of biological role, specifically methylates the pseudouridine at position 1915 (m3Psi1915) in 23S rRNA. This Methylorubrum populi (strain ATCC BAA-705 / NCIMB 13946 / BJ001) (Methylobacterium populi) protein is Ribosomal RNA large subunit methyltransferase H.